Consider the following 179-residue polypeptide: Acireductone dioxygenase (179 aa).

The Fe(2+) site is built by His97, His99, Glu103, and His141. Residues His97, His99, Glu103, and His141 each coordinate Ni(2+).

Belongs to the acireductone dioxygenase (ARD) family. As to quaternary structure, monomer. The cofactor is Fe(2+). Ni(2+) serves as cofactor.

The catalysed reaction is 1,2-dihydroxy-5-(methylsulfanyl)pent-1-en-3-one + O2 = 3-(methylsulfanyl)propanoate + CO + formate + 2 H(+). The enzyme catalyses 1,2-dihydroxy-5-(methylsulfanyl)pent-1-en-3-one + O2 = 4-methylsulfanyl-2-oxobutanoate + formate + 2 H(+). The protein operates within amino-acid biosynthesis; L-methionine biosynthesis via salvage pathway; L-methionine from S-methyl-5-thio-alpha-D-ribose 1-phosphate: step 5/6. Its function is as follows. Catalyzes 2 different reactions between oxygen and the acireductone 1,2-dihydroxy-3-keto-5-methylthiopentene (DHK-MTPene) depending upon the metal bound in the active site. Fe-containing acireductone dioxygenase (Fe-ARD) produces formate and 2-keto-4-methylthiobutyrate (KMTB), the alpha-ketoacid precursor of methionine in the methionine recycle pathway. Ni-containing acireductone dioxygenase (Ni-ARD) produces methylthiopropionate, carbon monoxide and formate, and does not lie on the methionine recycle pathway. The sequence is that of Acireductone dioxygenase from Gluconacetobacter diazotrophicus (strain ATCC 49037 / DSM 5601 / CCUG 37298 / CIP 103539 / LMG 7603 / PAl5).